The primary structure comprises 176 residues: Beta-carotene hydroxylase (176 aa).

The Fatty acid hydroxylase domain maps to 10–126 (LSVIAMEGIA…AHRLHHAVRG (117 aa)). Residues 152 to 176 (HGRPPKRDAAKDRPDAASPSSSSPE) are disordered. The segment covering 156-166 (PKRDAAKDRPD) has biased composition (basic and acidic residues). Over residues 167-176 (AASPSSSSPE) the composition is skewed to low complexity.

Belongs to the sterol desaturase family.

It participates in carotenoid biosynthesis; zeaxanthin biosynthesis. In terms of biological role, catalyzes the hydroxylation reaction from beta-carotene to zeaxanthin. This is Beta-carotene hydroxylase (crtZ) from Pseudescherichia vulneris (Escherichia vulneris).